The primary structure comprises 157 residues: uncharacterized protein (157 aa).

The signal sequence occupies residues 1-30 (MLPEQGPQPSTMPLWCLLAACTSLPRQAAT).

The protein resides in the secreted. This is an uncharacterized protein from Homo sapiens (Human).